Consider the following 776-residue polypeptide: Endonuclease MutS2 (776 aa).

330–337 is an ATP binding site; that stretch reads GPNTGGKT. Residues 701-776 form the Smr domain; the sequence is LDLRGMRYEE…GSGATIAILK (76 aa).

Belongs to the DNA mismatch repair MutS family. MutS2 subfamily. In terms of assembly, homodimer. Binds to stalled ribosomes, contacting rRNA.

In terms of biological role, endonuclease that is involved in the suppression of homologous recombination and thus may have a key role in the control of bacterial genetic diversity. Acts as a ribosome collision sensor, splitting the ribosome into its 2 subunits. Detects stalled/collided 70S ribosomes which it binds and splits by an ATP-hydrolysis driven conformational change. Acts upstream of the ribosome quality control system (RQC), a ribosome-associated complex that mediates the extraction of incompletely synthesized nascent chains from stalled ribosomes and their subsequent degradation. Probably generates substrates for RQC. The sequence is that of Endonuclease MutS2 from Lactococcus lactis subsp. cremoris (strain MG1363).